Reading from the N-terminus, the 434-residue chain is MSRLSKEEIGKRLLELIKDETKPAIGCTEPVAVAFTVATGKKYMTGEVLKIDLKVSKNILKNGKSVTIPNTEVCGLDIAGALGEICGDSEEGLFVFKNVNKDYLDKAKEMIKNKVVTLNPIENTDPVFVEATLKGEKDEVIAILRGGHTNIEKIIVNGTIAFEKDNKNEKDNKDCDFIKELSLKDIREITEDIGIEKLDFIMDGIEMNKEAAKEGLKREKGLTLGSSLLKLQQEGKLGKDSATIARILTAAGSDLRMGGGMCPIMTSGGSGNQGLCVILPINVVAEDIKASKEKLQRAVFFGHAVNNFVKKYTGKLSAICGCAIAAGIGATAGIAWLLGGKDKEINGAILNMLANLTGMVCDGAKGSCAIKLSTSASEAVISAYLALNDIIVPNNTGIIGNTVEDTINNLGMLCKDGFYKADDVMLSIACKEVI.

The protein belongs to the UPF0597 family.

In Clostridium botulinum (strain Loch Maree / Type A3), this protein is UPF0597 protein CLK_1462.